The sequence spans 426 residues: MISQLPDPLICHILSHLPIKDLVTTRVLSTRWRSLWLWLPCLELNSLYFPDFNAFVSFGDKFFDSNRVSCINKFKLYIYGYDVGVDDPSYLTSWIDAAVKCKIQHLHVQCLPAKYIYEMPLSLYICETLVYLKLCRVMLDDAEFVSLPCLKTIHLEYVWFPNEANLERFVSCCPVLEELKIYGCGNENAITLRLLSRSLKKLSINILKSMCDFHSEVVIDAPLLSYLKINDNVSERYIVNNLESNAKLDISLPFGLLDFDEASVSSRTDSIHSFLRGILKVSDMTIWVDTFKLICKYSELESLPRFGYMSRLHVTLCIYDLKWLPTFLESCPNLKSLILVCVGDNDEMLSEEMIQFGSSLVPECLLSSLEFVDIRIPFRGHLEVMKLVRYFLENSAILKKLSLDHDIFKKLFTIPRRSTKCQVVFI.

Positions 1–45 (MISQLPDPLICHILSHLPIKDLVTTRVLSTRWRSLWLWLPCLELN) constitute an F-box domain. An FBD domain is found at 353–405 (MIQFGSSLVPECLLSSLEFVDIRIPFRGHLEVMKLVRYFLENSAILKKLSLDH).

This chain is Putative FBD-associated F-box protein At5g53635, found in Arabidopsis thaliana (Mouse-ear cress).